Here is a 758-residue protein sequence, read N- to C-terminus: 5-methyltetrahydropteroyltriglutamate--homocysteine methyltransferase (758 aa).

5-methyltetrahydropteroyltri-L-glutamate is bound by residues 16–19 and Lys-112; that span reads RELK. L-homocysteine is bound by residues 433–435 and Glu-486; that span reads IGS. L-methionine contacts are provided by residues 433-435 and Glu-486; that span reads IGS. Residues 517-518 and Trp-563 each bind 5-methyltetrahydropteroyltri-L-glutamate; that span reads RC. Asp-601 is an L-homocysteine binding site. Position 601 (Asp-601) interacts with L-methionine. Glu-607 contributes to the 5-methyltetrahydropteroyltri-L-glutamate binding site. Positions 643, 645, and 667 each coordinate Zn(2+). His-696 functions as the Proton donor in the catalytic mechanism. Residue Cys-728 coordinates Zn(2+).

Belongs to the vitamin-B12 independent methionine synthase family. It depends on Zn(2+) as a cofactor.

The catalysed reaction is 5-methyltetrahydropteroyltri-L-glutamate + L-homocysteine = tetrahydropteroyltri-L-glutamate + L-methionine. It functions in the pathway amino-acid biosynthesis; L-methionine biosynthesis via de novo pathway; L-methionine from L-homocysteine (MetE route): step 1/1. Catalyzes the transfer of a methyl group from 5-methyltetrahydrofolate to homocysteine resulting in methionine formation. The sequence is that of 5-methyltetrahydropteroyltriglutamate--homocysteine methyltransferase from Neisseria meningitidis serogroup C (strain 053442).